Consider the following 1260-residue polypeptide: uncharacterized protein (1260 aa).

It is found in the plastid. It localises to the chloroplast. This is an uncharacterized protein from Ostreococcus tauri.